Reading from the N-terminus, the 101-residue chain is MMLEHVLVLSAYLFSIGIYGLITSRNMVRALMCLELILNAVNINFVTFSDFFDSRQLKGNIFSIFVIAIAAAEAAIGPAIVSSIYRNRKSTRINQSNLLNK.

3 helical membrane-spanning segments follow: residues 2-22 (MLEH…YGLI), 32-52 (MCLE…SDFF), and 61-81 (IFSI…PAIV).

Belongs to the complex I subunit 4L family. As to quaternary structure, NDH is composed of at least 16 different subunits, 5 of which are encoded in the nucleus.

It localises to the plastid. The protein resides in the chloroplast thylakoid membrane. It carries out the reaction a plastoquinone + NADH + (n+1) H(+)(in) = a plastoquinol + NAD(+) + n H(+)(out). It catalyses the reaction a plastoquinone + NADPH + (n+1) H(+)(in) = a plastoquinol + NADP(+) + n H(+)(out). Functionally, NDH shuttles electrons from NAD(P)H:plastoquinone, via FMN and iron-sulfur (Fe-S) centers, to quinones in the photosynthetic chain and possibly in a chloroplast respiratory chain. The immediate electron acceptor for the enzyme in this species is believed to be plastoquinone. Couples the redox reaction to proton translocation, and thus conserves the redox energy in a proton gradient. The polypeptide is NAD(P)H-quinone oxidoreductase subunit 4L, chloroplastic (Morus indica (Mulberry)).